A 61-amino-acid chain; its full sequence is Large ribosomal subunit protein uL30 (61 aa).

Belongs to the universal ribosomal protein uL30 family. Part of the 50S ribosomal subunit.

This chain is Large ribosomal subunit protein uL30, found in Francisella tularensis subsp. tularensis (strain FSC 198).